Reading from the N-terminus, the 276-residue chain is NAD kinase (276 aa).

Asp-61 acts as the Proton acceptor in catalysis. NAD(+)-binding positions include 61-62 (DG), Arg-66, 135-136 (NE), Arg-146, His-163, Asp-165, and Ala-200.

It belongs to the NAD kinase family. A divalent metal cation is required as a cofactor.

Its subcellular location is the cytoplasm. It carries out the reaction NAD(+) + ATP = ADP + NADP(+) + H(+). Functionally, involved in the regulation of the intracellular balance of NAD and NADP, and is a key enzyme in the biosynthesis of NADP. Catalyzes specifically the phosphorylation on 2'-hydroxyl of the adenosine moiety of NAD to yield NADP. The chain is NAD kinase from Chloroflexus aggregans (strain MD-66 / DSM 9485).